Here is a 268-residue protein sequence, read N- to C-terminus: MERYESLFAQLKERKEGAFVPFVTLGDPGIEQSLKIIDTLIEAGADALELGIPFSDPLADGPTIQNATLRAFAAGVTPAQCFEMLALIRQKHPTIPIGLLMYANLVFSKGIDEFYAQCEKVGVDSVLVADVPVEESAPFRQAALRHNVAPIFICPPNADDDLLRQIASYGRGYTYLLSRAGVTGAENRAALPLNHLVTKLKEYNAAPPLQGFGISAPDQVKAAIDAGAAGAISGSAIVKIIEQHINEPEKMLVALKAFVQPMKAATRS.

Residues Glu49 and Asp60 each act as proton acceptor in the active site.

The protein belongs to the TrpA family. In terms of assembly, tetramer of two alpha and two beta chains.

It catalyses the reaction (1S,2R)-1-C-(indol-3-yl)glycerol 3-phosphate + L-serine = D-glyceraldehyde 3-phosphate + L-tryptophan + H2O. The protein operates within amino-acid biosynthesis; L-tryptophan biosynthesis; L-tryptophan from chorismate: step 5/5. Its function is as follows. The alpha subunit is responsible for the aldol cleavage of indoleglycerol phosphate to indole and glyceraldehyde 3-phosphate. This chain is Tryptophan synthase alpha chain, found in Escherichia coli O17:K52:H18 (strain UMN026 / ExPEC).